We begin with the raw amino-acid sequence, 503 residues long: ATP synthase subunit beta (503 aa).

157 to 164 (GGAGVGKT) is an ATP binding site.

Belongs to the ATPase alpha/beta chains family. In terms of assembly, F-type ATPases have 2 components, CF(1) - the catalytic core - and CF(0) - the membrane proton channel. CF(1) has five subunits: alpha(3), beta(3), gamma(1), delta(1), epsilon(1). CF(0) has three main subunits: a(1), b(2) and c(9-12). The alpha and beta chains form an alternating ring which encloses part of the gamma chain. CF(1) is attached to CF(0) by a central stalk formed by the gamma and epsilon chains, while a peripheral stalk is formed by the delta and b chains.

It localises to the cell inner membrane. The catalysed reaction is ATP + H2O + 4 H(+)(in) = ADP + phosphate + 5 H(+)(out). Produces ATP from ADP in the presence of a proton gradient across the membrane. The catalytic sites are hosted primarily by the beta subunits. The protein is ATP synthase subunit beta of Flavobacterium psychrophilum (strain ATCC 49511 / DSM 21280 / CIP 103535 / JIP02/86).